We begin with the raw amino-acid sequence, 96 residues long: Xylulose kinase (96 aa).

Position 71-72 (71-72 (QH)) interacts with substrate.

It belongs to the FGGY kinase family.

It carries out the reaction D-xylulose + ATP = D-xylulose 5-phosphate + ADP + H(+). In terms of biological role, catalyzes the phosphorylation of D-xylulose to D-xylulose 5-phosphate. This chain is Xylulose kinase, found in Arthrobacter sp. (strain NRRL B3728).